The chain runs to 439 residues: Mitochondrial distribution and morphology protein 12 (439 aa).

The 439-residue stretch at 1 to 439 (MSIDINWEAA…VYPSFWTFLV (439 aa)) folds into the SMP-LTD domain. A compositionally biased stretch (acidic residues) spans 71–84 (EEDEGDEDFSDDQD). Disordered stretches follow at residues 71-104 (EEDEGDEDFSDDQDGAPKHPPTIATERSGAGTWQ), 182-278 (TPLA…HEKK), and 362-385 (YIPGINPIGGGASGGAASSRRRDD). Residues 212 to 229 (DYPRPVHRQTDTDIDSGH) show a composition bias toward basic and acidic residues. A compositionally biased stretch (polar residues) spans 230–255 (SRPSTADTLNSINSQRISNPALSHPH). The segment covering 256-269 (SSNESHPDTRDHSP) has biased composition (basic and acidic residues).

The protein belongs to the MDM12 family. Component of the ER-mitochondria encounter structure (ERMES) or MDM complex, composed of MMM1, MDM10, MDM12 and MDM34. An MMM1 homodimer associates with one molecule of MDM12 on each side in a pairwise head-to-tail manner, and the SMP-LTD domains of MMM1 and MDM12 generate a continuous hydrophobic tunnel for phospholipid trafficking.

The protein resides in the mitochondrion outer membrane. It localises to the endoplasmic reticulum membrane. Component of the ERMES/MDM complex, which serves as a molecular tether to connect the endoplasmic reticulum (ER) and mitochondria. Components of this complex are involved in the control of mitochondrial shape and protein biogenesis, and function in nonvesicular lipid trafficking between the ER and mitochondria. MDM12 is required for the interaction of the ER-resident membrane protein MMM1 and the outer mitochondrial membrane-resident beta-barrel protein MDM10. The MDM12-MMM1 subcomplex functions in the major beta-barrel assembly pathway that is responsible for biogenesis of all mitochondrial outer membrane beta-barrel proteins, and acts in a late step after the SAM complex. The MDM10-MDM12-MMM1 subcomplex further acts in the TOM40-specific pathway after the action of the MDM12-MMM1 complex. Essential for establishing and maintaining the structure of mitochondria and maintenance of mtDNA nucleoids. The polypeptide is Mitochondrial distribution and morphology protein 12 (Uncinocarpus reesii (strain UAMH 1704)).